Here is a 153-residue protein sequence, read N- to C-terminus: UPF0179 protein AF_2154 (153 aa).

It belongs to the UPF0179 family.

This chain is UPF0179 protein AF_2154, found in Archaeoglobus fulgidus (strain ATCC 49558 / DSM 4304 / JCM 9628 / NBRC 100126 / VC-16).